The primary structure comprises 56 residues: Large ribosomal subunit protein eL37 (56 aa).

Zn(2+)-binding residues include Cys19, Cys22, Cys34, and Cys37. Residues 19–37 (CRRCGSVSFNVHTKQCTSC) form a C4-type zinc finger.

This sequence belongs to the eukaryotic ribosomal protein eL37 family. It depends on Zn(2+) as a cofactor.

In terms of biological role, binds to the 23S rRNA. In Methanosarcina acetivorans (strain ATCC 35395 / DSM 2834 / JCM 12185 / C2A), this protein is Large ribosomal subunit protein eL37 (rpl37e).